The sequence spans 398 residues: DNA replication and repair protein RecF (398 aa).

Residue 30–37 (GSNGLGKT) coordinates ATP.

Belongs to the RecF family.

The protein resides in the cytoplasm. Functionally, the RecF protein is involved in DNA metabolism; it is required for DNA replication and normal SOS inducibility. RecF binds preferentially to single-stranded, linear DNA. It also seems to bind ATP. The chain is DNA replication and repair protein RecF from Renibacterium salmoninarum (strain ATCC 33209 / DSM 20767 / JCM 11484 / NBRC 15589 / NCIMB 2235).